The sequence spans 209 residues: ATP phosphoribosyltransferase (209 aa).

This sequence belongs to the ATP phosphoribosyltransferase family. Short subfamily. As to quaternary structure, heteromultimer composed of HisG and HisZ subunits.

It is found in the cytoplasm. The enzyme catalyses 1-(5-phospho-beta-D-ribosyl)-ATP + diphosphate = 5-phospho-alpha-D-ribose 1-diphosphate + ATP. Its pathway is amino-acid biosynthesis; L-histidine biosynthesis; L-histidine from 5-phospho-alpha-D-ribose 1-diphosphate: step 1/9. Catalyzes the condensation of ATP and 5-phosphoribose 1-diphosphate to form N'-(5'-phosphoribosyl)-ATP (PR-ATP). Has a crucial role in the pathway because the rate of histidine biosynthesis seems to be controlled primarily by regulation of HisG enzymatic activity. This Alkaliphilus metalliredigens (strain QYMF) protein is ATP phosphoribosyltransferase.